The chain runs to 154 residues: Interleukin-2 (154 aa).

The signal sequence occupies residues Met-1 to Ser-20. Thr-23 carries O-linked (GalNAc...) threonine glycosylation. An intrachain disulfide couples Cys-78 to Cys-126.

It belongs to the IL-2 family.

Its subcellular location is the secreted. Functionally, cytokine produced by activated CD4-positive helper T-cells and to a lesser extend activated CD8-positive T-cells and natural killer (NK) cells that plays pivotal roles in the immune response and tolerance. Binds to a receptor complex composed of either the high-affinity trimeric IL-2R (IL2RA/CD25, IL2RB/CD122 and IL2RG/CD132) or the low-affinity dimeric IL-2R (IL2RB and IL2RG). Interaction with the receptor leads to oligomerization and conformation changes in the IL-2R subunits resulting in downstream signaling starting with phosphorylation of JAK1 and JAK3. In turn, JAK1 and JAK3 phosphorylate the receptor to form a docking site leading to the phosphorylation of several substrates including STAT5. This process leads to activation of several pathways including STAT, phosphoinositide-3-kinase/PI3K and mitogen-activated protein kinase/MAPK pathways. Functions as a T-cell growth factor and can increase NK-cell cytolytic activity as well. Promotes strong proliferation of activated B-cells and subsequently immunoglobulin production. Plays a pivotal role in regulating the adaptive immune system by controlling the survival and proliferation of regulatory T-cells, which are required for the maintenance of immune tolerance. Moreover, participates in the differentiation and homeostasis of effector T-cell subsets, including Th1, Th2, Th17 as well as memory CD8-positive T-cells. The chain is Interleukin-2 (IL2) from Papio hamadryas (Hamadryas baboon).